Consider the following 688-residue polypeptide: Elongation factor G (688 aa).

The 275-residue stretch at 8 to 282 folds into the tr-type G domain; sequence ERTRNIGIMA…AVLDYLPAPT (275 aa). GTP contacts are provided by residues 17-24, 81-85, and 135-138; these read AHIDAGKT, DTPGH, and NKMD.

This sequence belongs to the TRAFAC class translation factor GTPase superfamily. Classic translation factor GTPase family. EF-G/EF-2 subfamily.

It localises to the cytoplasm. In terms of biological role, catalyzes the GTP-dependent ribosomal translocation step during translation elongation. During this step, the ribosome changes from the pre-translocational (PRE) to the post-translocational (POST) state as the newly formed A-site-bound peptidyl-tRNA and P-site-bound deacylated tRNA move to the P and E sites, respectively. Catalyzes the coordinated movement of the two tRNA molecules, the mRNA and conformational changes in the ribosome. This Clostridioides difficile (strain 630) (Peptoclostridium difficile) protein is Elongation factor G.